Here is a 154-residue protein sequence, read N- to C-terminus: Myoglobin (154 aa).

The region spanning 2–148 (VLSEGEWQLV…FRKDIAAKYK (147 aa)) is the Globin domain. Serine 4 is subject to Phosphoserine. A nitrite-binding site is contributed by histidine 65. O2 is bound at residue histidine 65. Phosphothreonine is present on threonine 68. Histidine 94 serves as a coordination point for heme b.

The protein belongs to the globin family. In terms of assembly, monomeric.

Its subcellular location is the cytoplasm. It localises to the sarcoplasm. The enzyme catalyses Fe(III)-heme b-[protein] + nitric oxide + H2O = Fe(II)-heme b-[protein] + nitrite + 2 H(+). It catalyses the reaction H2O2 + AH2 = A + 2 H2O. Its function is as follows. Monomeric heme protein which primary function is to store oxygen and facilitate its diffusion within muscle tissues. Reversibly binds oxygen through a pentacoordinated heme iron and enables its timely and efficient release as needed during periods of heightened demand. Depending on the oxidative conditions of tissues and cells, and in addition to its ability to bind oxygen, it also has a nitrite reductase activity whereby it regulates the production of bioactive nitric oxide. Under stress conditions, like hypoxia and anoxia, it also protects cells against reactive oxygen species thanks to its pseudoperoxidase activity. This Physeter macrocephalus (Sperm whale) protein is Myoglobin (MB).